The primary structure comprises 286 residues: Putative short-chain type dehydrogenase/reductase Rv0148 (286 aa).

11–35 is an NAD(+) binding site; it reads VTGAGGGLGREYALTLAGEGASVVV. Ser-151 contributes to the substrate binding site. The active-site Proton acceptor is the Tyr-164. Lys-280 is covalently cross-linked (Isoglutamyl lysine isopeptide (Lys-Gln) (interchain with Q-Cter in protein Pup)).

The protein belongs to the short-chain dehydrogenases/reductases (SDR) family. Pupylated at Lys-280 by the prokaryotic ubiquitin-like protein Pup, which probably leads to its degradation by the proteasome.

The chain is Putative short-chain type dehydrogenase/reductase Rv0148 from Mycobacterium tuberculosis (strain ATCC 25618 / H37Rv).